We begin with the raw amino-acid sequence, 331 residues long: Holliday junction branch migration complex subunit RuvB (331 aa).

The large ATPase domain (RuvB-L) stretch occupies residues 1–171; that stretch reads MTEPLDAALR…FGIIEHLEYY (171 aa). ATP-binding positions include L9, R10, G51, K54, T55, T56, 118-120, R161, Y171, and R208; that span reads EDF. T55 contacts Mg(2+). A small ATPAse domain (RuvB-S) region spans residues 172-242; it reads TPEEIGTNLL…RAQDALDKLG (71 aa). Residues 245 to 331 are head domain (RuvB-H); it reads TAGLDERDKK…AESDLGLYTN (87 aa). DNA-binding residues include R300 and R305.

The protein belongs to the RuvB family. Homohexamer. Forms an RuvA(8)-RuvB(12)-Holliday junction (HJ) complex. HJ DNA is sandwiched between 2 RuvA tetramers; dsDNA enters through RuvA and exits via RuvB. An RuvB hexamer assembles on each DNA strand where it exits the tetramer. Each RuvB hexamer is contacted by two RuvA subunits (via domain III) on 2 adjacent RuvB subunits; this complex drives branch migration. In the full resolvosome a probable DNA-RuvA(4)-RuvB(12)-RuvC(2) complex forms which resolves the HJ.

It is found in the cytoplasm. The enzyme catalyses ATP + H2O = ADP + phosphate + H(+). The RuvA-RuvB-RuvC complex processes Holliday junction (HJ) DNA during genetic recombination and DNA repair, while the RuvA-RuvB complex plays an important role in the rescue of blocked DNA replication forks via replication fork reversal (RFR). RuvA specifically binds to HJ cruciform DNA, conferring on it an open structure. The RuvB hexamer acts as an ATP-dependent pump, pulling dsDNA into and through the RuvAB complex. RuvB forms 2 homohexamers on either side of HJ DNA bound by 1 or 2 RuvA tetramers; 4 subunits per hexamer contact DNA at a time. Coordinated motions by a converter formed by DNA-disengaged RuvB subunits stimulates ATP hydrolysis and nucleotide exchange. Immobilization of the converter enables RuvB to convert the ATP-contained energy into a lever motion, pulling 2 nucleotides of DNA out of the RuvA tetramer per ATP hydrolyzed, thus driving DNA branch migration. The RuvB motors rotate together with the DNA substrate, which together with the progressing nucleotide cycle form the mechanistic basis for DNA recombination by continuous HJ branch migration. Branch migration allows RuvC to scan DNA until it finds its consensus sequence, where it cleaves and resolves cruciform DNA. This is Holliday junction branch migration complex subunit RuvB from Deinococcus geothermalis (strain DSM 11300 / CIP 105573 / AG-3a).